A 132-amino-acid polypeptide reads, in one-letter code: Ribosome-binding factor A (132 aa).

The protein belongs to the RbfA family. Monomer. Binds 30S ribosomal subunits, but not 50S ribosomal subunits or 70S ribosomes.

The protein localises to the cytoplasm. One of several proteins that assist in the late maturation steps of the functional core of the 30S ribosomal subunit. Associates with free 30S ribosomal subunits (but not with 30S subunits that are part of 70S ribosomes or polysomes). Required for efficient processing of 16S rRNA. May interact with the 5'-terminal helix region of 16S rRNA. In Bordetella avium (strain 197N), this protein is Ribosome-binding factor A.